A 37-amino-acid chain; its full sequence is Large ribosomal subunit protein bL36 (37 aa).

It belongs to the bacterial ribosomal protein bL36 family.

The sequence is that of Large ribosomal subunit protein bL36 from Marinomonas sp. (strain MWYL1).